The chain runs to 257 residues: 1-(5-phosphoribosyl)-5-[(5-phosphoribosylamino)methylideneamino] imidazole-4-carboxamide isomerase (257 aa).

Catalysis depends on Asp-8, which acts as the Proton acceptor. Asp-129 serves as the catalytic Proton donor.

The protein belongs to the HisA/HisF family.

The protein resides in the cytoplasm. The enzyme catalyses 1-(5-phospho-beta-D-ribosyl)-5-[(5-phospho-beta-D-ribosylamino)methylideneamino]imidazole-4-carboxamide = 5-[(5-phospho-1-deoxy-D-ribulos-1-ylimino)methylamino]-1-(5-phospho-beta-D-ribosyl)imidazole-4-carboxamide. It participates in amino-acid biosynthesis; L-histidine biosynthesis; L-histidine from 5-phospho-alpha-D-ribose 1-diphosphate: step 4/9. This Cyanothece sp. (strain PCC 7425 / ATCC 29141) protein is 1-(5-phosphoribosyl)-5-[(5-phosphoribosylamino)methylideneamino] imidazole-4-carboxamide isomerase.